We begin with the raw amino-acid sequence, 325 residues long: Glycine--tRNA ligase alpha subunit (325 aa).

The protein belongs to the class-II aminoacyl-tRNA synthetase family. In terms of assembly, tetramer of two alpha and two beta subunits.

The protein localises to the cytoplasm. The enzyme catalyses tRNA(Gly) + glycine + ATP = glycyl-tRNA(Gly) + AMP + diphosphate. This Ralstonia nicotianae (strain ATCC BAA-1114 / GMI1000) (Ralstonia solanacearum) protein is Glycine--tRNA ligase alpha subunit.